Reading from the N-terminus, the 194-residue chain is dCTP deaminase (194 aa).

Residues 110 to 115 (RSSLAR), D128, 136 to 138 (VLE), Y171, K178, and Q182 contribute to the dCTP site. The Proton donor/acceptor role is filled by E138.

This sequence belongs to the dCTP deaminase family. Homotrimer.

It catalyses the reaction dCTP + H2O + H(+) = dUTP + NH4(+). Its pathway is pyrimidine metabolism; dUMP biosynthesis; dUMP from dCTP (dUTP route): step 1/2. In terms of biological role, catalyzes the deamination of dCTP to dUTP. This Psychromonas ingrahamii (strain DSM 17664 / CCUG 51855 / 37) protein is dCTP deaminase.